The following is a 2698-amino-acid chain: Chromodomain-helicase-DNA-binding protein 6 (2698 aa).

3 stretches are compositionally biased toward basic and acidic residues: residues 1 to 12 (MKMKIQKKEKQL), 100 to 115 (EPGE…DREP), and 122 to 171 (EPKE…KRSC). Residues 1–243 (MKMKIQKKEK…KRRSGRQVKR (243 aa)) form a disordered region. The required for DNA-dependent ATPase activity stretch occupies residues 1–746 (MKMKIQKKEK…MMELRKCCNH (746 aa)). Residues 213–224 (QSLPNPSLQSPE) show a composition bias toward low complexity. 2 Chromo domains span residues 291–342 (NIIE…KDPR) and 374–438 (IEID…KPVE). In terms of domain architecture, Helicase ATP-binding spans 472-646 (LFNWYNRKNC…FSLLNFLEPS (175 aa)). An ATP-binding site is contributed by 485 to 492 (DEMGLGKT). The DEAH box motif lies at 597–600 (DEAH). One can recognise a Helicase C-terminal domain in the interval 786 to 955 (LIDKLLPKLI…LSKMEVEDLL (170 aa)). Positions 1318 to 1370 (SLSAEQGVTDGTSDIPERGNIDKEDSAEDKVDGLQKQTASPSDGSDGIFGEKK) are disordered. Positions 1320-1329 (SAEQGVTDGT) are enriched in polar residues. Residues 1332 to 1350 (IPERGNIDKEDSAEDKVDG) show a composition bias toward basic and acidic residues. In terms of domain architecture, Myb-like spans 1435 to 1489 (RWTRREQADFYRTVSSFGVVYDQEKEAFDWTQFRAISRLDKKSDENLEHYFHSFV). A compositionally biased stretch (polar residues) spans 1707 to 1730 (EPRSFQEAPSTNMQSRKKTVTVSA). The segment at 1707–1731 (EPRSFQEAPSTNMQSRKKTVTVSAS) is disordered. Ser1852 carries the post-translational modification Phosphoserine. Disordered regions lie at residues 1935 to 2046 (GLGS…ASGI), 2111 to 2137 (LPTP…HSFS), 2308 to 2337 (TTLN…QAEK), 2359 to 2387 (PGFG…IGSL), 2538 to 2587 (ASLA…PTIT), and 2626 to 2698 (QGRH…DDTN). Composition is skewed to basic and acidic residues over residues 1943-1955 (GEKP…DPYR), 1975-1991 (FKLK…ESSE), and 2004-2024 (SEPK…KDGA). 2 stretches are compositionally biased toward low complexity: residues 2117 to 2127 (SSSAGSRSSLS) and 2315 to 2336 (PEGP…SQAE). Residues 2538-2550 (ASLASTKSGASAT) are compositionally biased toward low complexity. Basic and acidic residues predominate over residues 2552–2573 (KTTEDELSGRDVKADSLVEDKP). 2 stretches are compositionally biased toward polar residues: residues 2578–2587 (FSDQSEPTIT) and 2664–2675 (SDQNCTESSVTV). The segment covering 2677 to 2698 (PEREHVAQAREEGLKDSNDDTN) has biased composition (basic and acidic residues).

The protein belongs to the SNF2/RAD54 helicase family. In terms of assembly, interacts with NFE2L2; involved in activation of the transcription. May interact with PPARA. As to expression, widely expressed.

The protein resides in the nucleus. The protein localises to the nucleoplasm. It carries out the reaction ATP + H2O = ADP + phosphate + H(+). ATP-dependent chromatin-remodeling factor. Regulates transcription by disrupting nucleosomes in a largely non-sliding manner which strongly increases the accessibility of chromatin. Activates transcription of specific genes in response to oxidative stress through interaction with NFE2L2. This Rattus norvegicus (Rat) protein is Chromodomain-helicase-DNA-binding protein 6 (Chd6).